A 582-amino-acid polypeptide reads, in one-letter code: Glutaredoxin domain-containing cysteine-rich protein CG12206 (582 aa).

The segment covering C217 to D227 has biased composition (polar residues). Disordered stretches follow at residues C217 to P244 and E260 to S300. A compositionally biased stretch (low complexity) spans S291–S300. Positions N423–A528 constitute a Glutaredoxin domain.

This sequence belongs to the GRXCR1 family.

The polypeptide is Glutaredoxin domain-containing cysteine-rich protein CG12206 (Drosophila melanogaster (Fruit fly)).